A 521-amino-acid chain; its full sequence is Cytochrome P450 52A9 (521 aa).

Heme is bound at residue C468.

This sequence belongs to the cytochrome P450 family. It depends on heme as a cofactor.

The protein localises to the membrane. Functionally, together with an NADPH cytochrome P450 the enzyme system catalyzes the terminal hydroxylation as the first step in the assimilation of alkanes and fatty acids. The sequence is that of Cytochrome P450 52A9 (CYP52A9) from Candida maltosa (Yeast).